A 355-amino-acid polypeptide reads, in one-letter code: uncharacterized protein (355 aa).

A chloroplast-targeting transit peptide spans 1–49; sequence MPMTVVSGRFSTALLPTCFSLSRLHSVKYAAQRRVVFVSRSAHASSASV.

Belongs to the methyltransferase superfamily.

Its subcellular location is the plastid. It localises to the chloroplast. The protein resides in the plastoglobule. This is an uncharacterized protein from Arabidopsis thaliana (Mouse-ear cress).